The chain runs to 120 residues: ATP-dependent Clp protease adapter protein ClpS (120 aa).

The disordered stretch occupies residues Met-1–Asp-20.

Belongs to the ClpS family. Binds to the N-terminal domain of the chaperone ClpA.

Its function is as follows. Involved in the modulation of the specificity of the ClpAP-mediated ATP-dependent protein degradation. This Albidiferax ferrireducens (strain ATCC BAA-621 / DSM 15236 / T118) (Rhodoferax ferrireducens) protein is ATP-dependent Clp protease adapter protein ClpS.